A 301-amino-acid chain; its full sequence is Growth-regulating factor 2 (301 aa).

Residues 11–46 (LFTATQWQELEHQALIYKYMAAGAPVPPDLLLHLRH) form the QLQ domain. 2 short sequence motifs (bipartite nuclear localization signal) span residues 83–102 (RRVE…KKWR) and 120–127 (RGKNRSRK). Positions 87–131 (DPEPGRCRRTDGKKWRCSREAYGESKYCEKHMHRGKNRSRKPVEM) constitute a WRC domain.

It belongs to the GRF family.

It is found in the nucleus. In terms of biological role, transcription activator that plays a regulatory role in gibberellin-induced stem elongation. In Oryza sativa subsp. japonica (Rice), this protein is Growth-regulating factor 2 (GRF2).